A 789-amino-acid polypeptide reads, in one-letter code: Protein translocase subunit SecA 2 (789 aa).

ATP contacts are provided by residues glutamine 79, 97–101, and aspartate 487; that span reads GEGKT.

This sequence belongs to the SecA family. Monomer and homodimer. Part of the essential Sec protein translocation apparatus which comprises SecA, SecYEG and auxiliary proteins SecDF. Other proteins may also be involved.

It is found in the cell membrane. It localises to the cytoplasm. It catalyses the reaction ATP + H2O + cellular proteinSide 1 = ADP + phosphate + cellular proteinSide 2.. Part of the Sec protein translocase complex. Interacts with the SecYEG preprotein conducting channel. Has a central role in coupling the hydrolysis of ATP to the transfer of proteins into and across the cell membrane, serving as an ATP-driven molecular motor driving the stepwise translocation of polypeptide chains across the membrane. This is Protein translocase subunit SecA 2 from Pediococcus pentosaceus (strain ATCC 25745 / CCUG 21536 / LMG 10740 / 183-1w).